We begin with the raw amino-acid sequence, 1161 residues long: MAQLANIGELLSMLDSSTLGVRDDVTAIFKESLNSERGPMLVNTLVDYYLETNSQPVLHILTTLQEPHDKHLLDKINEYVGKAATRLSILSLLGHVVRLQPSWKHKLSQAPLLPSLLKCLKMDTDVVVLTTGVLVLITMLPMIPQSGKQHLLDFFDIFGRLSSWCLKKPGHVTEVYLVHLHASVYALFHRLYGMYPCNFVSFLRSHYSMKENVETFEEVVKPMMEHVRIHPELVTGSKDHELDPRRWKTLETHDVVIECAKISLDPTEASYEDGYSVSHQLSACFPYRSADVTTSPYVDTQNSYGGSTSTPSSSSRLMLFSPPGQLPQSLSSPSTRLLPEPLQASLWSPSAVCGMTTPPTSPGNVPADLSHPYSKAFGTTAGGKGTPSGTPATSPPPAPPCPQDDCVHGSAAQASATAPRKEERADSSRPYLHRQSNDRGLEDPPGSKGSVTLRNLPDFLGDLASEEDSIEKDKEEAAISKELSEITTAEADPVVPRGGFDSPFYRDSLSGSQRKTHSAASGTQGSSVNPEPLHSSLDKHGPDTPKQAFTPIDPPSGSADVSPAGDRDRQTSLETSILTPSPCKIPPQRGVSFGSGQLPPYDHLFEVALPKTACHFVSKKTEELLKKVKGNPEEDCVPSTSPMEVLDRLIEQGAGAHSKELSRLSLPSKSVDWTHFGGSPPSDELRTLRDQLLLLHNQLLYERFKRQQHALRNRRLLRKVIRAAALEEHNAAMKDQLKLQEKDIQMWKVSLQKEQARYSQLQEQRDTMVTQLHSQIRQLQHDREEFYNQSQELQTKLEDCRNMIAELRVELKKANNKVCHTELLLSQVSQKLSNSESVQQQMEFLNRQLLVLGEVNELYLEQLQSKHPDTTKEVEMMKTAYRKELEKNRSHLLQQNQRLDASQRRVLELESLLAKKDHLLLEQKKYLEDVKSQASGQLLAAESRYEAQRKITRVLELEILDLYGRLEKDGRLRKLEEDRAEAAEAAEERLDCCSDGCTDSLVGHNEEASGHNGETRTSRPGGTRASCGGRVTGGSSSSSSELSTPEKPPSQRFSSRWEPALGEPSSSIPTTVGSLPSSKSFLGMKARELFRNKSESQCDEDSVTMSSSSLSETLKTELGKDSGTENKTSLSLDAPHPSSPNSDNVGQLHIMDYNETHPEHS.

A Glycyl lysine isopeptide (Lys-Gly) (interchain with G-Cter in ubiquitin) cross-link involves residue Lys30. Disordered stretches follow at residues 296 to 336 (PYVD…PSTR) and 353 to 591 (CGMT…QRGV). Residues 303 to 336 (SYGGSTSTPSSSSRLMLFSPPGQLPQSLSSPSTR) are compositionally biased toward low complexity. Residues 393 to 402 (TSPPPAPPCP) are compositionally biased toward pro residues. The tract at residues 403–784 (QDDCVHGSAA…QIRQLQHDRE (382 aa)) is mediates interaction with WDR45B. Residues 471 to 484 (EKDKEEAAISKELS) show a composition bias toward basic and acidic residues. Phosphoserine is present on residues Ser484, Ser502, Ser508, Ser518, Ser592, and Ser595. Positions 509–529 (LSGSQRKTHSAASGTQGSSVN) are enriched in polar residues. Coiled coils occupy residues 721–849 (IRAA…NRQL), 879–917 (TAYRKELEKNRSHLLQQNQRLDASQRRVLELESLLAKKD), and 967–991 (EKDGRLRKLEEDRAEAAEAAEERLD). 2 disordered regions span residues 1003–1077 (GHNE…SLPS) and 1092–1161 (NKSE…PEHS). The segment covering 1004 to 1017 (HNEEASGHNGETRT) has biased composition (basic and acidic residues). The segment covering 1026–1043 (SCGGRVTGGSSSSSSELS) has biased composition (low complexity). Residues 1064–1077 (PSSSIPTTVGSLPS) show a composition bias toward polar residues. Ser1094 carries the post-translational modification Phosphoserine. Residues 1103–1113 (VTMSSSSLSET) are compositionally biased toward low complexity. Composition is skewed to basic and acidic residues over residues 1114-1124 (LKTELGKDSGT) and 1152-1161 (DYNETHPEHS).

Component of the TSC-TBC complex (also named Rhebulator complex), composed of 2 molecules of TSC1, 2 molecules of TSC2 and 1 molecule of TBC1D7. Probably forms a complex composed of chaperones HSP90 and HSP70, co-chaperones STIP1/HOP, CDC37, PPP5C, PTGES3/p23, TSC1 and client protein TSC2. Forms a complex composed of chaperones HSP90 and HSP70, co-chaperones CDC37, PPP5C, TSC1 and client protein TSC2, CDK4, AKT, RAF1 and NR3C1; this complex does not contain co-chaperones STIP1/HOP and PTGES3/p23. Forms a complex containing HSP90AA1, TSC1 and TSC2; TSC1 is required to recruit TCS2 to the complex. Interacts (via C-terminus) with the closed form of HSP90AA1 (via the middle domain and TPR repeat-binding motif). Interacts with DOCK7. Interacts with FBXW5. Interacts with WDR45B. Interacts with RPAP3 and URI1. Phosphorylation at Ser-502 does not affect interaction with TSC2. In terms of processing, 'Lys-63'-linked ubiquitinated at Lys-30 by PELI1; the ubiquitination promotes TSC1/TSC2 complex stability.

Its subcellular location is the lysosome membrane. The protein localises to the cytoplasm. The protein resides in the cytosol. In terms of biological role, non-catalytic component of the TSC-TBC complex, a multiprotein complex that acts as a negative regulator of the canonical mTORC1 complex, an evolutionarily conserved central nutrient sensor that stimulates anabolic reactions and macromolecule biosynthesis to promote cellular biomass generation and growth. The TSC-TBC complex acts as a GTPase-activating protein (GAP) for the small GTPase RHEB, a direct activator of the protein kinase activity of mTORC1. In absence of nutrients, the TSC-TBC complex inhibits mTORC1, thereby preventing phosphorylation of ribosomal protein S6 kinase (RPS6KB1 and RPS6KB2) and EIF4EBP1 (4E-BP1) by the mTORC1 signaling. The TSC-TBC complex is inactivated in response to nutrients, relieving inhibition of mTORC1. Within the TSC-TBC complex, TSC1 stabilizes TSC2 and prevents TSC2 self-aggregation. Involved in microtubule-mediated protein transport via its ability to regulate mTORC1 signaling. Also acts as a co-chaperone for HSP90AA1 facilitating HSP90AA1 chaperoning of protein clients such as kinases, TSC2 and glucocorticoid receptor NR3C1. Increases ATP binding to HSP90AA1 and inhibits HSP90AA1 ATPase activity. Competes with the activating co-chaperone AHSA1 for binding to HSP90AA1, thereby providing a reciprocal regulatory mechanism for chaperoning of client proteins. Recruits TSC2 to HSP90AA1 and stabilizes TSC2 by preventing the interaction between TSC2 and ubiquitin ligase HERC1. The sequence is that of Hamartin from Mus musculus (Mouse).